The following is a 433-amino-acid chain: Phosphomethylpyrimidine synthase 1 (433 aa).

Substrate-binding positions include Asn66, Met94, Tyr123, His162, 184–186 (SRG), 225–228 (DALR), and Glu264. Zn(2+) is bound at residue His268. Substrate is bound at residue Tyr291. Zn(2+) is bound at residue His332. Cys408, Cys411, and Cys415 together coordinate [4Fe-4S] cluster.

It belongs to the ThiC family. [4Fe-4S] cluster is required as a cofactor.

The enzyme catalyses 5-amino-1-(5-phospho-beta-D-ribosyl)imidazole + S-adenosyl-L-methionine = 4-amino-2-methyl-5-(phosphooxymethyl)pyrimidine + CO + 5'-deoxyadenosine + formate + L-methionine + 3 H(+). Its pathway is cofactor biosynthesis; thiamine diphosphate biosynthesis. Functionally, catalyzes the synthesis of the hydroxymethylpyrimidine phosphate (HMP-P) moiety of thiamine from aminoimidazole ribotide (AIR) in a radical S-adenosyl-L-methionine (SAM)-dependent reaction. The polypeptide is Phosphomethylpyrimidine synthase 1 (Saccharolobus solfataricus (strain ATCC 35092 / DSM 1617 / JCM 11322 / P2) (Sulfolobus solfataricus)).